The chain runs to 68 residues: Serine rich endogenous peptide 22 (68 aa).

A signal peptide spans 1-25; it reads MNKALVWLITLLFLIFSATPNRVLA. Positions 50-64 match the SCOOP motif motif; it reads KIGVGASNSGHSPGA. Positions 56–58 match the SxS motif essential for MIK2 binding motif; the sequence is SNS.

The protein belongs to the serine rich endogenous peptide (SCOOP) phytocytokine family. As to quaternary structure, interacts with MIK2 (via extracellular leucine-rich repeat domain); this interaction triggers the formation of complex between MIK2 and the BAK1/SERK3 and SERK4 coreceptors, and subsequent BAK1 activation by phosphorylation.

It localises to the cell membrane. Its subcellular location is the secreted. The protein localises to the extracellular space. The protein resides in the apoplast. Functionally, brassicaceae-specific phytocytokine (plant endogenous peptide released into the apoplast) perceived by MIK2 in a BAK1/SERK3 and SERK4 coreceptors-dependent manner, that modulates various physiological and antimicrobial processes including growth prevention and reactive oxygen species (ROS) response regulation. This Arabidopsis thaliana (Mouse-ear cress) protein is Serine rich endogenous peptide 22.